The sequence spans 835 residues: Outer membrane usher protein FasD (835 aa).

The first 21 residues, 1-21, serve as a signal peptide directing secretion; sequence MNKYPPLLTMLIIGIGSNAVA. Cysteines 810 and 834 form a disulfide.

Belongs to the fimbrial export usher family.

It localises to the cell outer membrane. Functionally, involved in the export and assembly of the 987P fimbriae subunits across the outer membrane. The sequence is that of Outer membrane usher protein FasD (fasD) from Escherichia coli.